The chain runs to 151 residues: Probable transcriptional regulator syrB2 (151 aa).

Positions M1–K61 are disordered. Residues A11–P23 are compositionally biased toward low complexity. Residues A24–K35 are compositionally biased toward basic residues.

Belongs to the SyrB family.

Its function is as follows. Seems to affect the transcription of cya3. May be negatively autoregulated. This Rhizobium meliloti (strain 1021) (Ensifer meliloti) protein is Probable transcriptional regulator syrB2 (syrB2).